The following is a 280-amino-acid chain: Manganese transport system membrane protein MntC (280 aa).

9 helical membrane passes run 16–36 (ALIT…FIIL), 41–61 (LMGD…YMMG), 62–82 (MNFF…IGFV), 92–112 (TAIG…ISFA), 137–157 (TIII…EFLV), 168–188 (YGLN…LVTV), 193–213 (TVGI…AYLL), 221–241 (IVLA…FSYI), and 244–264 (LASG…AFLF).

It belongs to the ABC-3 integral membrane protein family.

The protein localises to the cell membrane. In terms of biological role, this protein is probably a component of a manganese permease, a binding protein-dependent, ATP-driven transport system. This is Manganese transport system membrane protein MntC (mntC) from Listeria monocytogenes serovar 1/2a (strain ATCC BAA-679 / EGD-e).